The chain runs to 405 residues: Cytochrome P450 107B1 (405 aa).

Residue cysteine 352 participates in heme binding.

It belongs to the cytochrome P450 family. It depends on heme as a cofactor.

Its subcellular location is the cytoplasm. Functionally, not known, probably involved in the catabolism of octane and guaiacol. It displays a weak activity in the O-dealkylation of 7-ethoxycoumarin. This chain is Cytochrome P450 107B1 (cyp107B1), found in Saccharopolyspora erythraea (strain ATCC 11635 / DSM 40517 / JCM 4748 / NBRC 13426 / NCIMB 8594 / NRRL 2338).